The following is a 156-amino-acid chain: ATP synthase subunit b (156 aa).

The helical transmembrane segment at 12 to 32 (IAFAIFVLFCMKFIWPALMGA) threads the bilayer.

The protein belongs to the ATPase B chain family. In terms of assembly, F-type ATPases have 2 components, F(1) - the catalytic core - and F(0) - the membrane proton channel. F(1) has five subunits: alpha(3), beta(3), gamma(1), delta(1), epsilon(1). F(0) has three main subunits: a(1), b(2) and c(10-14). The alpha and beta chains form an alternating ring which encloses part of the gamma chain. F(1) is attached to F(0) by a central stalk formed by the gamma and epsilon chains, while a peripheral stalk is formed by the delta and b chains.

Its subcellular location is the cell inner membrane. Functionally, f(1)F(0) ATP synthase produces ATP from ADP in the presence of a proton or sodium gradient. F-type ATPases consist of two structural domains, F(1) containing the extramembraneous catalytic core and F(0) containing the membrane proton channel, linked together by a central stalk and a peripheral stalk. During catalysis, ATP synthesis in the catalytic domain of F(1) is coupled via a rotary mechanism of the central stalk subunits to proton translocation. Its function is as follows. Component of the F(0) channel, it forms part of the peripheral stalk, linking F(1) to F(0). The chain is ATP synthase subunit b from Psychrobacter sp. (strain PRwf-1).